A 1208-amino-acid chain; its full sequence is Lysine-specific demethylase JMJ17 (1208 aa).

Residues 1-36 (MLLCDSCNKGWHIYCLSPPLKHIPLGNWYCLECLNT) form a PHD-type 1; degenerate zinc finger. Cys-4, Cys-7, Cys-30, and Cys-33 together coordinate Zn(2+). One can recognise a JmjC domain in the interval 126–292 (EYCGSPWNLN…YGGSGAELYR (167 aa)). The Fe cation site is built by His-172, Glu-174, and His-260. 8 residues coordinate Zn(2+): Cys-369, Cys-372, Cys-383, Cys-385, Cys-392, His-395, Cys-400, and Cys-402. The C5HC2 zinc finger occupies 369–421 (CIICQQFLHLSAIVCNCRPSVFACLEHWKHLCECEPTKLRLEYRYTLAELDMM). The short motif at 613 to 620 (SKKISSAK) is the Nuclear localization signal element. The PHD-type 2 zinc finger occupies 1099 to 1145 (MLHCICLKPYNSRSMVSCSQCGEWYHTYCLKLHWRPKAYVCSACCPL). Zn(2+)-binding residues include Cys-1102, Cys-1104, Cys-1116, Cys-1119, His-1124, Cys-1127, Cys-1139, and Cys-1142.

The protein belongs to the JARID1 histone demethylase family. The cofactor is Fe(2+). In terms of tissue distribution, expressed in inflorescences, roots, seedlings and siliques, and, at low levels, in leaves and stems.

The protein localises to the nucleus. It carries out the reaction N(6),N(6),N(6)-trimethyl-L-lysyl(4)-[histone H3] + 2-oxoglutarate + O2 = N(6),N(6)-dimethyl-L-lysyl(4)-[histone H3] + formaldehyde + succinate + CO2. The catalysed reaction is N(6),N(6)-dimethyl-L-lysyl(4)-[histone H3] + 2-oxoglutarate + O2 = N(6)-methyl-L-lysyl(4)-[histone H3] + formaldehyde + succinate + CO2. It catalyses the reaction N(6)-methyl-L-lysyl(4)-[histone H3] + 2-oxoglutarate + O2 = L-lysyl(4)-[histone H3] + formaldehyde + succinate + CO2. The enzyme catalyses N(6),N(6),N(6)-trimethyl-L-lysyl(4)-[histone H3] + 3 2-oxoglutarate + 3 O2 = L-lysyl(4)-[histone H3] + 3 formaldehyde + 3 succinate + 3 CO2. Functionally, functions as a histone H3 'Lys-4' (H3K4me) demethylase involved in the regulation of gene expression. Active on H3K4me1, H3K4me2 and H3K4me3. Repressor of the abscisic acid (ABA) signaling pathway, especially during stomatal closure regulation. Negative regulator of responses to dehydration stress by binding directly to the chromatin of SRK2E/OST1 and demethylating H3K4me3 to regulates its expression. Together with JMJ14 and JMJ16, required for plant growth and development. The protein is Lysine-specific demethylase JMJ17 of Arabidopsis thaliana (Mouse-ear cress).